Reading from the N-terminus, the 910-residue chain is MASSAQSGGSSGGPAVPTVQRGIVKMVLSGCAIIVRGQPRGGPPPERQINLSNIRAGNLARRAAVAQPDAKDTPDEPWAFPAREFLRKKLIGKEVCFTIENKTPQGREYGMIYLGKDTNGENIAESLVAEGLATRREGMRANNPEQNRLAECEEQAKASKKGMWSEGNGSHTIRDLKYTIENPRHFVDSHHQKPVNAIIEHVRDGSVVRALLLPDYYLVTVMLSGIKCPTFRREADGSETPEPFAAEAKFFTESRLLQRDVQIILESCHNQNILGTILHPNGNITELLLKEGFARCVDWSIAVYTRGAEKLRAAERFAKERRLRIWRDYVAPTANLDQKDKQFVAKVMQVLNADAIVVKLNSGDYKTIHLSSIRPPRLEGENTQDKNKKLRPLYDIPYMFEAREFLRKKLIGKKVNVTVDYIRPASPATDTVPAFSERTCATVTIGGINIAEALVSKGLATVIRYRQDDDQRSSHYDELLAAEARAIKNGKGLHSKKEVPIHRVADISGDTQKAKQFLPFLQRAGRSEAVVEYVFSGSRLKLYLPKETCLITFLLAGIECPRGARNLPGLVQEGEPFSEEATLFTKELVLQREVEVEVESMDKAGNFIGWLHIDGANLSVLLVEHALSKVHFTAERSAYYKSLLSAEEAAKQKKEKVWAHYEEQPVEELMPVLEEKERSASYKPVFVTEITDDLHFYVQDVETGTQLEKLMENMRNDIASHPPVEGSYAPRRGEFCIAKFVDGEWYRARVEKVESPAKVHVFYIDYGNREILPSTRLGTLPPAFSTRVLPAQATEYAFAFIQVPQDEDARTDAVDSVVRDIQNTQCLLNVEHLSAGCPHVTLQFADSKGDVGLGLVKEGLVMVEVRKEKQFQKVITEYLNAQESAKSARLNLWRYGDFRADDADEFGYSR.

Residue Ala-2 is modified to N-acetylalanine. TNase-like domains follow at residues 18–166 (TVQR…MWSE), 193–328 (KPVN…IWRD), and 341–496 (KQFV…LHSK). Thr-103 bears the Phosphothreonine mark. Lys-193 is subject to N6-acetyllysine. Phosphothreonine is present on Thr-240. 2 short sequence motifs (nuclear localization signal) span residues 321-325 (RRLRI) and 388-392 (KKLRP). Ser-426 is modified (phosphoserine). Residue Lys-513 forms a Glycyl lysine isopeptide (Lys-Gly) (interchain with G-Cter in SUMO2) linkage. One can recognise a TNase-like 4 domain in the interval 525-660 (GRSEAVVEYV…KQKKEKVWAH (136 aa)). Lys-641 bears the N6-acetyllysine mark. Ser-645 carries the phosphoserine modification. One can recognise a Tudor domain in the interval 729–787 (APRRGEFCIAKFVDGEWYRARVEKVESPAKVHVFYIDYGNREILPSTRLGTLPPAFSTR). Residue Thr-779 is modified to Phosphothreonine. Phosphoserine occurs at positions 785 and 909.

In terms of assembly, forms a ternary complex with STAT6 and POLR2A. Associates with the RNA-induced silencing complex (RISC). Interacts with the RISC components AGO2, FMR1 and TNRC6A. Interacts with GTF2E1 and GTF2E2. Interacts with PIM1. Interacts with STAT5. Interacts with SYT11 (via C2 2 domain); the interaction with SYT11 is direct. Phosphorylated by PIM1 in vitro. As to expression, in lactating cows highly expressed in mammary epithelial cells.

The protein resides in the cytoplasm. Its subcellular location is the nucleus. It is found in the melanosome. The catalysed reaction is Endonucleolytic cleavage to nucleoside 3'-phosphates and 3'-phosphooligonucleotide end-products.. In terms of biological role, endonuclease that mediates miRNA decay of both protein-free and AGO2-loaded miRNAs. As part of its function in miRNA decay, regulates mRNAs involved in G1-to-S phase transition. Functions as a bridging factor between STAT6 and the basal transcription factor. Plays a role in PIM1 regulation of MYB activity. Functions as a transcriptional coactivator for STAT5. The chain is Staphylococcal nuclease domain-containing protein 1 (SND1) from Bos taurus (Bovine).